We begin with the raw amino-acid sequence, 303 residues long: Serine/threonine-protein phosphatase PP-X homolog 2 (303 aa).

Asp51, His53, Asp79, and Asn111 together coordinate Mn(2+). His112 (proton donor) is an active-site residue. Positions 161 and 235 each coordinate Mn(2+).

The protein belongs to the PPP phosphatase family. PP-4 (PP-X) subfamily. It depends on Mn(2+) as a cofactor.

It catalyses the reaction O-phospho-L-seryl-[protein] + H2O = L-seryl-[protein] + phosphate. The enzyme catalyses O-phospho-L-threonyl-[protein] + H2O = L-threonyl-[protein] + phosphate. The protein is Serine/threonine-protein phosphatase PP-X homolog 2 (Ppx2) of Paramecium tetraurelia.